We begin with the raw amino-acid sequence, 238 residues long: N-acetylneuraminic acid outer membrane channel protein NanC (238 aa).

The signal sequence occupies residues 1–23 (MKKAKILSGVLLLCFSSPLISQA). At 24-25 (AT) the chain is on the periplasmic side. At 26–32 (LDVRGGY) the chain is embedded in the membrane. The Extracellular portion of the chain corresponds to 33–39 (RSGSHAY). The chain crosses the lipid bilayer at residues 40 to 49 (ETRLKVSEGW). Over 50-52 (QNG) the chain is Periplasmic. A membrane pass occupies residues 53 to 61 (WWASMESNT). The Extracellular portion of the chain corresponds to 62–76 (WNTIHDNKKENAALN). A transmembrane helix spans residues 77 to 86 (DVQVEVNYAI). The Periplasmic portion of the chain corresponds to 87-91 (KLDDQ). The segment at 92–102 (WTVRPGMLTHF) is a transmembrane helix. The Extracellular segment spans residues 103–107 (SSNGT). A transmembrane span lies at residues 108–117 (RYGPYVKLSW). At 118–122 (DATKD) the chain is on the periplasmic side. A membrane pass occupies residues 123 to 132 (LKFGIRYRYD). The Extracellular portion of the chain corresponds to 133-151 (WKAYRQQDLSGDMSRDNVH). At 152–159 (RWDGYVTY) the chain is embedded in the membrane. Residues 160–164 (HINSD) are Periplasmic-facing. A membrane pass occupies residues 165-173 (FTFAWQTTL). Over 174 to 190 (YSKQNDYRYANHKKWAT) the chain is Extracellular. A membrane pass occupies residues 191 to 200 (ENAFVLQYHM). Residues 201–203 (TPD) lie on the Periplasmic side of the membrane. A membrane pass occupies residues 204–212 (ITPYIEYDY). Residues 213-228 (LDRQGVYNGRDNLSEN) are Extracellular-facing. The hydrophobic stretch at 229 to 236 (SYRIGVSF) threads the membrane. The Periplasmic segment spans residues 237–238 (KL).

Belongs to the oligogalacturonate-specific porin KdgM (TC 1.B.35) family. NanC subfamily. As to quaternary structure, monomer.

The protein localises to the cell outer membrane. It carries out the reaction N-acetylneuraminate(in) = N-acetylneuraminate(out). Functionally, outer membrane channel protein allowing the entry of N-acetylneuraminic acid (Neu5Ac, the most abundant sialic acid on host cell surfaces) into the bacteria. NanC proteins form high-conductance channels which are open at low membrane potentials and which have a weak anion selectivity. This chain is N-acetylneuraminic acid outer membrane channel protein NanC (nanC), found in Escherichia coli O6:H1 (strain CFT073 / ATCC 700928 / UPEC).